The following is a 96-amino-acid chain: VICTACGQQVNQFQKDSIYRHPTLNVLICKRWCAEGGNLICCDSCHNAFCKKCIWRNLGRKEISKIMNEKNEWHCYICCPEPLLDLIAVCDSVLEN.

The GATA-type; atypical zinc-finger motif lies at 1–12; that stretch reads VICTACGQQVNQ. The ADD domain maps to 1–96; it reads VICTACGQQV…IAVCDSVLEN (96 aa). The PHD-type; atypical zinc finger occupies 27–82; the sequence is LICKRWCAEGGNLICCDSCHNAFCKKCIWRNLGRKEISKIMNEKNEWHCYICCPEP.

The protein belongs to the SNF2/RAD54 helicase family. In terms of tissue distribution, expressed in developing and adult testis. Also weakly expressed in prostate and epididymis.

It is found in the nucleus. It carries out the reaction ATP + H2O = ADP + phosphate + H(+). Functionally, could be a global transcriptional regulator. Modifies gene expression by affecting chromatin. This Notamacropus eugenii (Tammar wallaby) protein is Transcriptional regulator ATRY (ATRY).